Here is a 469-residue protein sequence, read N- to C-terminus: Mitochondrial adenyl nucleotide antiporter SLC25A25 (469 aa).

Positions methionine 1–aspartate 165 are regulatory N-terminal domain. The Mitochondrial intermembrane segment spans residues methionine 1–histidine 189. 3 EF-hand domains span residues threonine 47–glutamate 80, aspartate 78–lysine 113, and isoleucine 114–glutamate 149. Ca(2+) contacts are provided by aspartate 60, aspartate 62, aspartate 64, glutamine 66, and glutamate 71. The linker region stretch occupies residues isoleucine 151 to histidine 160. Residues valine 166–arginine 469 are C-terminal transmembrane transporter domain. Solcar repeat units follow at residues glycine 184–leucine 270, leucine 278–threonine 363, and proline 375–threonine 463. Residues leucine 190–leucine 207 traverse the membrane as a helical segment. The Mitochondrial matrix segment spans residues aspartate 208–arginine 244. Residues glycine 245 to tyrosine 264 form a helical membrane-spanning segment. Residues glutamate 265–glycine 287 lie on the Mitochondrial intermembrane side of the membrane. Residues serine 288–methionine 301 form a helical membrane-spanning segment. Over glutamate 302–lysine 337 the chain is Mitochondrial matrix. Residues glycine 338–tyrosine 357 traverse the membrane as a helical segment. Residues glutamate 358–leucine 380 lie on the Mitochondrial intermembrane side of the membrane. Residues leucine 381–leucine 398 traverse the membrane as a helical segment. Residues alanine 399–arginine 437 lie on the Mitochondrial matrix side of the membrane. A helical transmembrane segment spans residues glycine 438–tyrosine 457. The Mitochondrial intermembrane segment spans residues glutamate 458 to arginine 469.

The protein belongs to the mitochondrial carrier (TC 2.A.29) family.

Its subcellular location is the mitochondrion inner membrane. The enzyme catalyses Mg(2+)(out) + phosphate(in) + ATP(out) = Mg(2+)(in) + phosphate(out) + ATP(in). Activated by an increase in cytosolic calcium levels that induce a conformational change of the N-terminal regulatory domain, uncapping the channel and allowing transport. Functionally, electroneutral antiporter that most probably mediates the transport of adenyl nucleotides through the inner mitochondrial membrane. Originally identified as an ATP-magnesium/inorganic phosphate antiporter, it could have a broader specificity for adenyl nucleotides. By regulating the mitochondrial matrix adenyl nucleotide pool could adapt to changing cellular energetic demands and indirectly regulate adenyl nucleotide-dependent metabolic pathways. This Mus musculus (Mouse) protein is Mitochondrial adenyl nucleotide antiporter SLC25A25.